The sequence spans 186 residues: MNYVDQNKRKWLSLGGIALGISILPNSVLAMVSTPKPRILTFRNINTGERLSGEFSLAKGFSPAMLKKLDYLMRDKRTNQVHKMDPNLFQKFYNIQTNLGLRNAEIEVICGYRSASTNAMRRRQSRGVAKNSYHIKGKAIDFRIAGVPLIKVKSSAESLRNGGVGYYPTSNFIHVDTGPVRTWKGV.

An N-terminal signal peptide occupies residues 1–30 (MNYVDQNKRKWLSLGGIALGISILPNSVLA). 3 residues coordinate Zn(2+): H134, D141, and H174.

This sequence belongs to the peptidase M15 family. The cofactor is Zn(2+).

It participates in cell wall biogenesis; cell wall polysaccharide biosynthesis. L,D-endopeptidase that cleaves meso-diaminopimelic acid (mDAP)-mDAP cross-links in peptidoglycan. It works in conjunction with other elongation-specific D,D-endopeptidases to make space for efficient incorporation of nascent peptidoglycan strands into the sacculus and thus enable cell wall expansion. In Haemophilus influenzae (strain ATCC 51907 / DSM 11121 / KW20 / Rd), this protein is Probable peptidoglycan L,D-endopeptidase MepK.